We begin with the raw amino-acid sequence, 422 residues long: UDP-N-acetylglucosamine 1-carboxyvinyltransferase (422 aa).

22-23 (KN) is a binding site for phosphoenolpyruvate. Arg92 provides a ligand contact to UDP-N-acetyl-alpha-D-glucosamine. Cys116 acts as the Proton donor in catalysis. 2-(S-cysteinyl)pyruvic acid O-phosphothioketal is present on Cys116. Residues 121-125 (RPVDQ), Asp307, and Ile329 contribute to the UDP-N-acetyl-alpha-D-glucosamine site.

This sequence belongs to the EPSP synthase family. MurA subfamily.

It localises to the cytoplasm. It catalyses the reaction phosphoenolpyruvate + UDP-N-acetyl-alpha-D-glucosamine = UDP-N-acetyl-3-O-(1-carboxyvinyl)-alpha-D-glucosamine + phosphate. The protein operates within cell wall biogenesis; peptidoglycan biosynthesis. Its function is as follows. Cell wall formation. Adds enolpyruvyl to UDP-N-acetylglucosamine. The polypeptide is UDP-N-acetylglucosamine 1-carboxyvinyltransferase (Psychrobacter arcticus (strain DSM 17307 / VKM B-2377 / 273-4)).